The primary structure comprises 240 residues: Putative protein FAM10A4 (240 aa).

Residues 38–94 form a disordered region; it reads MGGTATQKAKSEENTKEEKPDSKVEEDLKADEPSSEESDLEIDKEGVIEPDTDAPQE. Residues 46–69 show a composition bias toward basic and acidic residues; the sequence is AKSEENTKEEKPDSKVEEDLKADE. Positions 85-94 are enriched in acidic residues; it reads IEPDTDAPQE. TPR repeat units follow at residues 110 to 143, 145 to 177, and 179 to 211; these read ANDKKVAAIEALNDGELQKAIDLFTDAIKLNPRL, ILYAKRASVFVKLQKPNAAIRDCDRAIEINPDS, and QPYKRRGKAHRLLGHWEEAAHDLALACKFDYDE. Residues 220–240 are disordered; sequence VQPRAQKIAEHQRKYERKREE. The span at 226 to 240 shows a compositional bias: basic and acidic residues; it reads KIAEHQRKYERKREE.

The protein belongs to the FAM10 family. As to expression, highly expressed in bone marrow and weakly in placenta, pancreas, heart and HeLa cell line.

The protein resides in the cytoplasm. This chain is Putative protein FAM10A4 (ST13P4), found in Homo sapiens (Human).